We begin with the raw amino-acid sequence, 291 residues long: Taste receptor type 2 member 16 (291 aa).

A topological domain (extracellular) is located at residue methionine 1. A helical membrane pass occupies residues 2–22 (IPIQLTVFFMIIYVLESLTII). Residues 23–41 (VQSSLIVAVLGREWLQVRR) are Cytoplasmic-facing. The helical transmembrane segment at 42–62 (LMPVDMILISLGISRFCLQWA) threads the bilayer. At 63 to 84 (SMLNNFCSYFNLNYVLCNLTIT) the chain is on the extracellular side. An N-linked (GlcNAc...) asparagine glycan is attached at asparagine 80. A helical transmembrane segment spans residues 85–105 (WEFFNILTFWLNSLLTVFYCI). The Cytoplasmic portion of the chain corresponds to 106–125 (KVSSFTHHIFLWLRWRILRL). Residues 126–146 (FPWILLGSLMITCVTIIPSAI) traverse the membrane as a helical segment. Residues 147–182 (GNYIQIQLLTMEHLPRNSTVTDKLEKFHQYQFQAHT) are Extracellular-facing. The N-linked (GlcNAc...) asparagine glycan is linked to asparagine 163. Residues 183–203 (VALVIPFILFLASTILLMASL) traverse the membrane as a helical segment. The Cytoplasmic segment spans residues 204–228 (TKQIQHHSTGHCNPSMKAHFTALRS). A helical transmembrane segment spans residues 229–249 (LAVLFIVFTSYFLTILITIIG). Over 250–257 (TLFDKRCW) the chain is Extracellular. Residues 258-278 (LWVWEAFVYAFILMHSTSLML) traverse the membrane as a helical segment. The Cytoplasmic segment spans residues 279 to 291 (SSPTLKRILKGKC).

It belongs to the G-protein coupled receptor T2R family. As to quaternary structure, interacts with RTP3 and RTP4.

Its subcellular location is the cell membrane. Functionally, receptor that may play a role in the perception of bitterness and is gustducin-linked. May play a role in sensing the chemical composition of the gastrointestinal content. The activity of this receptor may stimulate alpha gustducin, mediate PLC-beta-2 activation and lead to the gating of TRPM5. In Pan troglodytes (Chimpanzee), this protein is Taste receptor type 2 member 16 (TAS2R16).